We begin with the raw amino-acid sequence, 460 residues long: Cysteine--tRNA ligase (460 aa).

Cys28 contacts Zn(2+). The 'HIGH' region signature appears at Met30 to His40. Positions 209, 234, and 238 each coordinate Zn(2+). Residues Lys266 to Ser270 carry the 'KMSKS' region motif. Lys269 provides a ligand contact to ATP.

It belongs to the class-I aminoacyl-tRNA synthetase family. As to quaternary structure, monomer. It depends on Zn(2+) as a cofactor.

It is found in the cytoplasm. The catalysed reaction is tRNA(Cys) + L-cysteine + ATP = L-cysteinyl-tRNA(Cys) + AMP + diphosphate. The polypeptide is Cysteine--tRNA ligase (Pseudomonas putida (strain ATCC 47054 / DSM 6125 / CFBP 8728 / NCIMB 11950 / KT2440)).